A 342-amino-acid polypeptide reads, in one-letter code: Nuclear hormone receptor family member nhr-150 (342 aa).

A DNA-binding region (nuclear receptor) is located at residues Met1 to Ser71. The NR C4-type zinc finger occupies Cys2 to Cys22. An NR C4-type; degenerate zinc finger spans residues Cys39–Cys54. An NR LBD domain is found at Ser94–Lys341.

Belongs to the nuclear hormone receptor family.

The protein localises to the nucleus. Orphan nuclear receptor. The sequence is that of Nuclear hormone receptor family member nhr-150 (nhr-150) from Caenorhabditis elegans.